Here is a 159-residue protein sequence, read N- to C-terminus: 2-C-methyl-D-erythritol 2,4-cyclodiphosphate synthase (159 aa).

A divalent metal cation-binding residues include Asp-8 and His-10. 4-CDP-2-C-methyl-D-erythritol 2-phosphate is bound by residues 8 to 10 and 34 to 35; these read DVH and HS. His-42 contacts a divalent metal cation. 4-CDP-2-C-methyl-D-erythritol 2-phosphate contacts are provided by residues 56–58, 61–65, 100–106, 132–135, Phe-139, and Arg-142; these read DIG, FPDTD, AQAPKMA, and TTTE.

This sequence belongs to the IspF family. Homotrimer. Requires a divalent metal cation as cofactor.

It carries out the reaction 4-CDP-2-C-methyl-D-erythritol 2-phosphate = 2-C-methyl-D-erythritol 2,4-cyclic diphosphate + CMP. Its pathway is isoprenoid biosynthesis; isopentenyl diphosphate biosynthesis via DXP pathway; isopentenyl diphosphate from 1-deoxy-D-xylulose 5-phosphate: step 4/6. Functionally, involved in the biosynthesis of isopentenyl diphosphate (IPP) and dimethylallyl diphosphate (DMAPP), two major building blocks of isoprenoid compounds. Catalyzes the conversion of 4-diphosphocytidyl-2-C-methyl-D-erythritol 2-phosphate (CDP-ME2P) to 2-C-methyl-D-erythritol 2,4-cyclodiphosphate (ME-CPP) with a corresponding release of cytidine 5-monophosphate (CMP). This Cronobacter sakazakii (strain ATCC BAA-894) (Enterobacter sakazakii) protein is 2-C-methyl-D-erythritol 2,4-cyclodiphosphate synthase.